The chain runs to 146 residues: Snaclec CTL-Eoc124 (146 aa).

The first 23 residues, 1–23, serve as a signal peptide directing secretion; the sequence is MGRFISVSFGLLVVFLSLSGTGA. Intrachain disulfides connect Cys-25–Cys-36, Cys-53–Cys-142, and Cys-119–Cys-134. The region spanning 32–143 is the C-type lectin domain; sequence YQGHCYRVFN…CSRTNNVACK (112 aa).

This sequence belongs to the snaclec family. As to quaternary structure, heterodimer; disulfide-linked. In terms of tissue distribution, expressed by the venom gland.

The protein localises to the secreted. In terms of biological role, interferes with one step of hemostasis (modulation of platelet aggregation, or coagulation cascade, for example). This Echis ocellatus (Ocellated saw-scaled viper) protein is Snaclec CTL-Eoc124.